The following is a 348-amino-acid chain: Probable dual-specificity RNA methyltransferase RlmN (348 aa).

E93 functions as the Proton acceptor in the catalytic mechanism. A Radical SAM core domain is found at 99-333 (TEKRLTACLS…VSLRKSRGSD (235 aa)). C106 and C338 are disulfide-bonded. Positions 113, 117, and 120 each coordinate [4Fe-4S] cluster. S-adenosyl-L-methionine is bound by residues 160–161 (GE), S190, 219–221 (SLH), and N295. The active-site S-methylcysteine intermediate is the C338.

The protein belongs to the radical SAM superfamily. RlmN family. It depends on [4Fe-4S] cluster as a cofactor.

It is found in the cytoplasm. The catalysed reaction is adenosine(2503) in 23S rRNA + 2 reduced [2Fe-2S]-[ferredoxin] + 2 S-adenosyl-L-methionine = 2-methyladenosine(2503) in 23S rRNA + 5'-deoxyadenosine + L-methionine + 2 oxidized [2Fe-2S]-[ferredoxin] + S-adenosyl-L-homocysteine. The enzyme catalyses adenosine(37) in tRNA + 2 reduced [2Fe-2S]-[ferredoxin] + 2 S-adenosyl-L-methionine = 2-methyladenosine(37) in tRNA + 5'-deoxyadenosine + L-methionine + 2 oxidized [2Fe-2S]-[ferredoxin] + S-adenosyl-L-homocysteine. Functionally, specifically methylates position 2 of adenine 2503 in 23S rRNA and position 2 of adenine 37 in tRNAs. The sequence is that of Probable dual-specificity RNA methyltransferase RlmN from Prochlorococcus marinus (strain MIT 9515).